A 357-amino-acid polypeptide reads, in one-letter code: Peptide chain release factor 1 (357 aa).

Glutamine 234 is subject to N5-methylglutamine. Over residues 284–307 (KKQEQRSNDRKQQVGSGDRSERIR) the composition is skewed to basic and acidic residues. Positions 284–313 (KKQEQRSNDRKQQVGSGDRSERIRTYNFPQ) are disordered.

It belongs to the prokaryotic/mitochondrial release factor family. Post-translationally, methylated by PrmC. Methylation increases the termination efficiency of RF1.

The protein resides in the cytoplasm. Functionally, peptide chain release factor 1 directs the termination of translation in response to the peptide chain termination codons UAG and UAA. The protein is Peptide chain release factor 1 of Borrelia turicatae (strain 91E135).